A 199-amino-acid polypeptide reads, in one-letter code: Holliday junction branch migration complex subunit RuvA (199 aa).

The tract at residues 1 to 64 (MIALLTGKLA…EDAINLYGFR (64 aa)) is domain I. Residues 65–143 (TMEEKEMFQL…KLGHGPLQQD (79 aa)) are domain II. The flexible linker stretch occupies residues 144–148 (VAPAD). The domain III stretch occupies residues 149–199 (AHNDMRDDVVSALVNLGYKEAVVQKTVDEIGVAADATVESLLKQALKKLMK).

This sequence belongs to the RuvA family. Homotetramer. Forms an RuvA(8)-RuvB(12)-Holliday junction (HJ) complex. HJ DNA is sandwiched between 2 RuvA tetramers; dsDNA enters through RuvA and exits via RuvB. An RuvB hexamer assembles on each DNA strand where it exits the tetramer. Each RuvB hexamer is contacted by two RuvA subunits (via domain III) on 2 adjacent RuvB subunits; this complex drives branch migration. In the full resolvosome a probable DNA-RuvA(4)-RuvB(12)-RuvC(2) complex forms which resolves the HJ.

It localises to the cytoplasm. In terms of biological role, the RuvA-RuvB-RuvC complex processes Holliday junction (HJ) DNA during genetic recombination and DNA repair, while the RuvA-RuvB complex plays an important role in the rescue of blocked DNA replication forks via replication fork reversal (RFR). RuvA specifically binds to HJ cruciform DNA, conferring on it an open structure. The RuvB hexamer acts as an ATP-dependent pump, pulling dsDNA into and through the RuvAB complex. HJ branch migration allows RuvC to scan DNA until it finds its consensus sequence, where it cleaves and resolves the cruciform DNA. The sequence is that of Holliday junction branch migration complex subunit RuvA from Geotalea daltonii (strain DSM 22248 / JCM 15807 / FRC-32) (Geobacter daltonii).